A 304-amino-acid polypeptide reads, in one-letter code: UDP-3-O-acyl-N-acetylglucosamine deacetylase (304 aa).

Zn(2+) is bound by residues His79, His238, and Asp242. His265 serves as the catalytic Proton donor.

This sequence belongs to the LpxC family. Zn(2+) is required as a cofactor.

The enzyme catalyses a UDP-3-O-[(3R)-3-hydroxyacyl]-N-acetyl-alpha-D-glucosamine + H2O = a UDP-3-O-[(3R)-3-hydroxyacyl]-alpha-D-glucosamine + acetate. Its pathway is glycolipid biosynthesis; lipid IV(A) biosynthesis; lipid IV(A) from (3R)-3-hydroxytetradecanoyl-[acyl-carrier-protein] and UDP-N-acetyl-alpha-D-glucosamine: step 2/6. Catalyzes the hydrolysis of UDP-3-O-myristoyl-N-acetylglucosamine to form UDP-3-O-myristoylglucosamine and acetate, the committed step in lipid A biosynthesis. The sequence is that of UDP-3-O-acyl-N-acetylglucosamine deacetylase from Chromobacterium violaceum (strain ATCC 12472 / DSM 30191 / JCM 1249 / CCUG 213 / NBRC 12614 / NCIMB 9131 / NCTC 9757 / MK).